Reading from the N-terminus, the 311-residue chain is Asialoglycoprotein receptor 2 (311 aa).

Residues 1–44 are disordered; the sequence is MAKDFQDIQQLSSEENDHPFHQGEGPGTRRLNPRRGNPFLKGPP. The Cytoplasmic segment spans residues 1–58; it reads MAKDFQDIQQLSSEENDHPFHQGEGPGTRRLNPRRGNPFLKGPPPAQPLAQRLCSMVC. Residues 5–8 carry the Endocytosis signal motif; it reads FQDI. Ser13 is subject to Phosphoserine. Cys54 carries the S-palmitoyl cysteine lipid modification. Residues 59–79 form a helical; Signal-anchor for type II membrane protein membrane-spanning segment; sequence FSLLALSFNILLLVVICVTGS. Over 80-311 the chain is Extracellular; sequence QSEGHGGAQL…KRRNATGEVA (232 aa). N-linked (GlcNAc...) asparagine glycosylation is found at Asn102 and Asn170. The region spanning 176 to 302 is the C-type lectin domain; sequence CCPVNWVEHQ…LQVYRWVCEK (127 aa). 3 disulfide bridges follow: Cys177–Cys188, Cys205–Cys300, and Cys278–Cys292. Asn305 is a glycosylation site (N-linked (GlcNAc...) asparagine).

As to quaternary structure, the functioning ligand-binding unit of this receptor is thought to be at least a dimer. Interacts with LASS2. In terms of assembly, (Microbial infection) Interacts with hepatitis E virus capsid protein ORF2. In terms of tissue distribution, expressed exclusively in hepatic parenchymal cells.

The protein resides in the membrane. Functionally, mediates the endocytosis of plasma glycoproteins to which the terminal sialic acid residue on their complex carbohydrate moieties has been removed. The receptor recognizes terminal galactose and N-acetylgalactosamine units. After ligand binding to the receptor, the resulting complex is internalized and transported to a sorting organelle, where receptor and ligand are disassociated. The receptor then returns to the cell membrane surface. The chain is Asialoglycoprotein receptor 2 (ASGR2) from Homo sapiens (Human).